The primary structure comprises 124 residues: Small ribosomal subunit protein uS12cz/uS12cy (124 aa).

Belongs to the universal ribosomal protein uS12 family. In terms of assembly, part of the 30S ribosomal subunit.

Its subcellular location is the plastid. It localises to the chloroplast. In terms of biological role, with S4 and S5 plays an important role in translational accuracy. Located at the interface of the 30S and 50S subunits. The sequence is that of Small ribosomal subunit protein uS12cz/uS12cy (rps12-A) from Zea mays (Maize).